Consider the following 206-residue polypeptide: Large ribosomal subunit protein uL4 (206 aa).

Residues 49–76 (QSAKTRTEVRGGGIKPWRQKGTGRARQG) form a disordered region.

Belongs to the universal ribosomal protein uL4 family. Part of the 50S ribosomal subunit.

In terms of biological role, one of the primary rRNA binding proteins, this protein initially binds near the 5'-end of the 23S rRNA. It is important during the early stages of 50S assembly. It makes multiple contacts with different domains of the 23S rRNA in the assembled 50S subunit and ribosome. Functionally, forms part of the polypeptide exit tunnel. This is Large ribosomal subunit protein uL4 from Clostridium botulinum (strain Alaska E43 / Type E3).